A 124-amino-acid polypeptide reads, in one-letter code: Desulfoferrodoxin homolog (124 aa).

Residues C10, C13, C29, C30, H49, H69, H75, C117, and H120 each coordinate Fe cation.

The protein belongs to the desulfoferrodoxin family. Fe(3+) is required as a cofactor. Cu(2+) serves as cofactor.

This chain is Desulfoferrodoxin homolog, found in Methanothermobacter thermautotrophicus (strain ATCC 29096 / DSM 1053 / JCM 10044 / NBRC 100330 / Delta H) (Methanobacterium thermoautotrophicum).